The following is a 189-amino-acid chain: Glucose-6-phosphate isomerase (189 aa).

Residues His-88, His-90, Glu-97, and His-136 each coordinate Fe cation.

It belongs to the archaeal-type GPI family. As to quaternary structure, homodimer.

The protein resides in the cytoplasm. The enzyme catalyses alpha-D-glucose 6-phosphate = beta-D-fructose 6-phosphate. Its pathway is carbohydrate degradation; glycolysis; D-glyceraldehyde 3-phosphate and glycerone phosphate from D-glucose: step 2/4. This Thermococcus gammatolerans (strain DSM 15229 / JCM 11827 / EJ3) protein is Glucose-6-phosphate isomerase.